Here is a 61-residue protein sequence, read N- to C-terminus: Defensin-like peptide TXKs2 (61 aa).

Positions 1-19 (MTYAILIIVSLLLISDRIS) are cleaved as a signal peptide. A propeptide spanning residues 20–22 (NVV) is cleaved from the precursor. 3 disulfide bridges follow: Cys26–Cys47, Cys33–Cys56, and Cys37–Cys58.

This sequence belongs to the invertebrate defensin family. In terms of tissue distribution, expressed by the venom gland.

The protein resides in the secreted. Its function is as follows. Antibacterial protein. The protein is Defensin-like peptide TXKs2 of Olivierus martensii (Manchurian scorpion).